The chain runs to 455 residues: Nuclear receptor subfamily 6 group A member 1-B (455 aa).

Residues 38–113 (ERWCLICGDR…MGMNRKAIRE (76 aa)) constitute a DNA-binding region (nuclear receptor). NR C4-type zinc fingers lie at residues 41–61 (CLICGDRASGLHYGIISCEGC) and 77–96 (CNRDKNCQMSRKQRNRCQYC). Residues 145–173 (EGSDLSDSWSHGYSNHSSPGNSLSEGGQS) form a disordered region. Residues 149–165 (LSDSWSHGYSNHSSPGN) are compositionally biased toward polar residues. Residues 215–446 (QTHTLTGQIL…YSCTTNQNPW (232 aa)) form the NR LBD domain.

It belongs to the nuclear hormone receptor family. NR6 subfamily. Homodimer.

The protein localises to the nucleus. Its function is as follows. Probable orphan nuclear receptor. Binds to a response element containing repeats of the motif 5'-AGGTCA-3'. This Danio rerio (Zebrafish) protein is Nuclear receptor subfamily 6 group A member 1-B.